The following is a 201-amino-acid chain: IMP cyclohydrolase (201 aa).

Belongs to the archaeal IMP cyclohydrolase family.

It carries out the reaction IMP + H2O = 5-formamido-1-(5-phospho-D-ribosyl)imidazole-4-carboxamide. It participates in purine metabolism; IMP biosynthesis via de novo pathway; IMP from 5-formamido-1-(5-phospho-D-ribosyl)imidazole-4-carboxamide: step 1/1. Catalyzes the cyclization of 5-formylamidoimidazole-4-carboxamide ribonucleotide to IMP. This Methanococcus maripaludis (strain C6 / ATCC BAA-1332) protein is IMP cyclohydrolase.